A 1852-amino-acid chain; its full sequence is Dihydropyridine-sensitive L-type skeletal muscle calcium channel subunit alpha-1 (1852 aa).

Residues 1-70 are Cytoplasmic-facing; the sequence is MESGSGGGGG…KTCINIVEWK (70 aa). The I repeat unit spans residues 57–354; that stretch reads NPFRKTCINI…LVLGALSGEF (298 aa). A helical transmembrane segment spans residues 71 to 86; that stretch reads PFEIIILLTIFANCVA. At 87–107 the chain is on the extracellular side; sequence LAVFLPMPEEDTNNTNLTLES. 2 N-linked (GlcNAc...) asparagine glycosylation sites follow: N99 and N102. Residues 108-127 traverse the membrane as a helical segment; that stretch reads LEYIFLVIFTLECFLKIVAY. Topologically, residues 128-139 are cytoplasmic; that stretch reads GLLFHEGAYLRN. A helical transmembrane segment spans residues 140–155; it reads CWNILDFVIVFMGLFT. Topologically, residues 156-176 are extracellular; the sequence is LVVDTINTIAGVPTEKGGGFD. Residues 177 to 195 form a helical membrane-spanning segment; it reads MKALRAFRVLRPLRLVSGV. At 196 to 214 the chain is on the cytoplasmic side; the sequence is PSLQVVMSSILKSMLPLFH. A helical membrane pass occupies residues 215–234; it reads IALLVFFMVHIYAIMGLELF. At 235–326 the chain is on the extracellular side; that stretch reads KCKMHKTCYY…WINDAMGNDW (92 aa). N-linked (GlcNAc...) asparagine glycosylation is present at N274. Residues 327 to 351 form a helical membrane-spanning segment; the sequence is PWIYFLTLILVGSFFILNLVLGALS. Over 352–447 the chain is Cytoplasmic; sequence GEFTKEREES…RKCHVWVKSK (96 aa). Residues 374 to 391 form a binding to the beta subunit region; the sequence is QQMDEDLEGYMEWITHAE. The II repeat unit spans residues 433–679; that stretch reads NVVLRRKCHV…VFLAIAVDNL (247 aa). The chain crosses the membrane as a helical span at residues 448–466; that stretch reads FFNWWVLLVVLLNTLVIAM. Over 467-481 the chain is Extracellular; the sequence is EHHNQTEGLTSFQDT. N470 carries an N-linked (GlcNAc...) asparagine glycan. The helical transmembrane segment at 482-501 threads the bilayer; that stretch reads ANVILLACFTIEMVMKMYAF. Residues 502–509 lie on the Cytoplasmic side of the membrane; the sequence is GPRAYFMS. The helical transmembrane segment at 510-528 threads the bilayer; it reads IFNRFDCFVVTIGILEIIL. Residues 529–538 are Extracellular-facing; the sequence is VVSNIMTPLG. The helical transmembrane segment at 539–557 threads the bilayer; it reads ISVMRCIRLLRLFKLTRYW. The Cytoplasmic segment spans residues 558-576; the sequence is TSLNNLVASLLNSVKSIAS. Residues 577–596 traverse the membrane as a helical segment; sequence LLLLLFLFIVIFALLGMQVF. Over 597 to 651 the chain is Extracellular; the sequence is GGKFNFPDRVIQRSNFDNFPQALISVFQVLTGEEWDSIMYNGIMAHGGPQSPGIL. Residues 652-675 form a helical membrane-spanning segment; that stretch reads VSIYFIILYVCGNFVLLNVFLAIA. The Cytoplasmic segment spans residues 676-815; sequence VDNLAEAESL…KLCHRIVNHT (140 aa). The stretch at 802-1084 is one III repeat; it reads HKFRKLCHRI…IFVGFVIVTF (283 aa). The chain crosses the membrane as a helical span at residues 816 to 834; that stretch reads TFTNIILLFILLSSISLAA. At 835–850 the chain is on the extracellular side; that stretch reads EDPIDPRSFRNKVLAY. Residues 851–870 traverse the membrane as a helical segment; sequence ADIVFTTVFTIEIVLKMTVY. Residues 871-882 are Cytoplasmic-facing; sequence GAFLHTGSFCRN. The helical transmembrane segment at 883-901 threads the bilayer; that stretch reads SFNILDLIVVGVSLLSMGM. The Extracellular portion of the chain corresponds to 902–908; sequence ESSTISV. The chain crosses the membrane as a helical span at residues 909–927; sequence VKILRVLRVLRPLRAINRA. At 928–946 the chain is on the cytoplasmic side; that stretch reads KGLKHVVQCMFVAIKTIGN. Residues 947-966 form a helical membrane-spanning segment; it reads IVLVTMLLDFMFACIGVQLF. Residues 967–1056 lie on the Extracellular side of the membrane; it reads KGKLYYCTDP…TGPLYNNRVG (90 aa). The interval 1004–1093 is dihydropyridine binding; it reads RMWVNSDFNF…FQKQGEQEYK (90 aa). The chain crosses the membrane as a helical span at residues 1057 to 1081; the sequence is ISIFFIIYIIIIAFFMMNIFVGFVI. Residues 1082 to 1134 are Cytoplasmic-facing; the sequence is VTFQKQGEQEYKDCELDKNQRQCVQYALKARPLKCYIPKNPHQYRVWYFVTSC. Residues 1121-1405 form an IV repeat; sequence NPHQYRVWYF…LFVAIIMDNV (285 aa). A helical transmembrane segment spans residues 1135 to 1153; the sequence is YFEYLMFFLIMLNTLCLGI. The Extracellular segment spans residues 1154 to 1168; it reads QHCNQSDHITKLSDT. N1157 carries an N-linked (GlcNAc...) asparagine glycan. A helical transmembrane segment spans residues 1169-1188; the sequence is LNLIFTVLFTGEMIVKLIAF. At 1189-1196 the chain is on the cytoplasmic side; it reads KAKGYFGD. A helical transmembrane segment spans residues 1197 to 1215; that stretch reads PWNVFDFIIVVGSIVDVVL. At 1216–1252 the chain is on the extracellular side; the sequence is SEVDAALEARGGLWCLHGCAEVNPMQAIAEAENVRVS. Residues 1253-1271 form a helical membrane-spanning segment; that stretch reads ITFFRLFRVLRLIKLLNRS. Topologically, residues 1272–1290 are cytoplasmic; it reads EGIRNLLWTFIKSFQALPH. Residues 1291 to 1310 traverse the membrane as a helical segment; that stretch reads VGLLIVMLFFIYAVIGMQMF. At 1311-1377 the chain is on the extracellular side; the sequence is GKVALVDGTE…GEEYTCGSSI (67 aa). Residues 1358-1424 form a dihydropyridine binding region; sequence LCDAKSDYGP…LGPHHLDEFK (67 aa). The segment at 1370 to 1413 is phenylalkylamine binding; that stretch reads EYTCGSSIAVFYFLSFYILCAFLIINLFVAIIMDNVDYLTRDWS. A helical membrane pass occupies residues 1378 to 1402; the sequence is AVFYFLSFYILCAFLIINLFVAIIM. The Cytoplasmic segment spans residues 1403–1852; the sequence is DNVDYLTRDW…TKPKENTSAV (450 aa). One can recognise an EF-hand domain in the interval 1418-1453; sequence HHLDEFKKIWAEYDPEATGRIKHLDVVTLLRRIQPP. Residues D1431, E1433, T1435, R1437, and D1442 each coordinate Ca(2+). The tract at residues 1820 to 1852 is disordered; sequence NRQSGKVTKRKRRPIPVPPGTKSTKPKENTSAV.

The protein belongs to the calcium channel alpha-1 subunit (TC 1.A.1.11) family. As to quaternary structure, multisubunit complex consisting of alpha-1, alpha-2, beta and delta subunits in a 1:1:1:1 ratio. The channel activity is directed by the pore-forming and voltage-sensitive alpha-1 subunit. In many cases, this subunit is sufficient to generate voltage-sensitive calcium channel activity. The auxiliary subunits beta and alpha-2/delta linked by a disulfide bridge regulate the channel activity. An additional gamma subunit is present only in skeletal muscle L-type channel. May be non-phosphorylated. As to expression, skeletal muscle.

It localises to the membrane. Voltage-sensitive calcium channels (VSCC) mediate the entry of calcium ions into excitable cells and are also involved in a variety of calcium-dependent processes, including muscle contraction, gene expression, cell motility, cell division and cell death. The isoform alpha-1S gives rise to L-type calcium currents. Long-lasting (L-type) calcium channels belong to the 'high-voltage activated' (HVA) group. They are blocked by dihydropyridines (DHP), phenylalkylamines, and by benzothiazepines. Calcium channels containing the alpha-1S subunit play an important role in excitation-contraction coupling in skeletal muscle. The sequence is that of Dihydropyridine-sensitive L-type skeletal muscle calcium channel subunit alpha-1 from Cyprinus carpio (Common carp).